A 501-amino-acid polypeptide reads, in one-letter code: Aldehyde dehydrogenase 1A1 (501 aa).

S2 carries the N-acetylserine modification. N6-acetyllysine occurs at positions 91 and 128. NAD(+) is bound by residues 167-170 (IPWN), 193-196 (KPAE), 226-227 (GP), and 246-247 (GS). At K252 the chain carries N6-acetyllysine. E269 serves as the catalytic Proton acceptor. 269 to 271 (ELG) provides a ligand contact to NAD(+). C303 acts as the Nucleophile in catalysis. Residues 336–501 (LNSGINQGPQ…VAIKISQKNS (166 aa)) are mediates interaction with PRMT3. 349 to 353 (EQHDK) serves as a coordination point for NAD(+). 2 positions are modified to N6-acetyllysine: K353 and K367. An NAD(+)-binding site is contributed by 400–402 (EIF). At K410 the chain carries N6-acetyllysine. At S413 the chain carries Phosphoserine. An N6-acetyllysine mark is found at K419, K435, and K495.

Belongs to the aldehyde dehydrogenase family. Homotetramer. Interacts with PRMT3; the interaction is direct, inhibits ALDH1A1 aldehyde dehydrogenase activity and is independent of the methyltransferase activity of PRMT3. In terms of processing, the N-terminus is blocked most probably by acetylation.

It localises to the cytoplasm. Its subcellular location is the cytosol. The protein localises to the cell projection. It is found in the axon. The catalysed reaction is an aldehyde + NAD(+) + H2O = a carboxylate + NADH + 2 H(+). It catalyses the reaction all-trans-retinal + NAD(+) + H2O = all-trans-retinoate + NADH + 2 H(+). The enzyme catalyses 9-cis-retinal + NAD(+) + H2O = 9-cis-retinoate + NADH + 2 H(+). It carries out the reaction 11-cis-retinal + NAD(+) + H2O = 11-cis-retinoate + NADH + 2 H(+). The catalysed reaction is 13-cis-retinal + NAD(+) + H2O = 13-cis-retinoate + NADH + 2 H(+). It catalyses the reaction 3-deoxyglucosone + NAD(+) + H2O = 2-dehydro-3-deoxy-D-gluconate + NADH + 2 H(+). The enzyme catalyses (E)-4-hydroxynon-2-enal + NAD(+) + H2O = (E)-4-hydroxynon-2-enoate + NADH + 2 H(+). It carries out the reaction malonaldehyde + NAD(+) + H2O = 3-oxopropanoate + NADH + 2 H(+). The catalysed reaction is hexanal + NAD(+) + H2O = hexanoate + NADH + 2 H(+). It catalyses the reaction propanal + NAD(+) + H2O = propanoate + NADH + 2 H(+). The enzyme catalyses acetaldehyde + NAD(+) + H2O = acetate + NADH + 2 H(+). It carries out the reaction benzaldehyde + NAD(+) + H2O = benzoate + NADH + 2 H(+). The catalysed reaction is 4-aminobutanal + NAD(+) + H2O = 4-aminobutanoate + NADH + 2 H(+). It functions in the pathway cofactor metabolism; retinol metabolism. Its function is as follows. Cytosolic dehydrogenase that catalyzes the irreversible oxidation of a wide range of aldehydes to their corresponding carboxylic acid. Functions downstream of retinol dehydrogenases and catalyzes the oxidation of retinaldehyde into retinoic acid, the second step in the oxidation of retinol/vitamin A into retinoic acid. This pathway is crucial to control the levels of retinol and retinoic acid, two important molecules which excess can be teratogenic and cytotoxic. Also oxidizes aldehydes resulting from lipid peroxidation like (E)-4-hydroxynon-2-enal/HNE, malonaldehyde and hexanal that form protein adducts and are highly cytotoxic. By participating for instance to the clearance of (E)-4-hydroxynon-2-enal/HNE in the lens epithelium prevents the formation of HNE-protein adducts and lens opacification. Also functions downstream of fructosamine-3-kinase in the fructosamine degradation pathway by catalyzing the oxidation of 3-deoxyglucosone, the carbohydrate product of fructosamine 3-phosphate decomposition, which is itself a potent glycating agent that may react with lysine and arginine side-chains of proteins. Also has an aminobutyraldehyde dehydrogenase activity and is probably part of an alternative pathway for the biosynthesis of GABA/4-aminobutanoate in midbrain, thereby playing a role in GABAergic synaptic transmission. The chain is Aldehyde dehydrogenase 1A1 from Mesocricetus auratus (Golden hamster).